A 504-amino-acid polypeptide reads, in one-letter code: U3 snoRNP-associated protein-like YAO (504 aa).

Residues 1–120 form a disordered region; it reads MKYNNEKKKG…DDDDDEDDDE (120 aa). Residues 20-33 are compositionally biased toward basic and acidic residues; it reads GSNERDPFFEEEPK. 2 stretches are compositionally biased toward acidic residues: residues 41–54 and 70–81; these read DDDD…DAEE and EVEDEDEFADET. A compositionally biased stretch (basic and acidic residues) spans 89-106; the sequence is LAEEMLNRRREAMRRERE. Residues 107–120 show a composition bias toward acidic residues; the sequence is EADNDDDDDEDDDE. WD repeat units follow at residues 159-198, 220-259, 262-301, 304-342, 344-382, 413-452, and 456-496; these read KHRR…TDKY, NHSR…HVQA, GHRN…FITE, GHQG…RMIY, APAS…PVFV, SANS…IRPL, and PLTG…QNGV.

Belongs to the WD repeat RRP9 family. Expressed in tissues with active in cell division such as shoot apexes, root tips, lateral root primordia, embryos, endosperm, pollen grains and embryo sacs.

It localises to the nucleus. Its subcellular location is the nucleolus. Component of a nucleolar small nuclear ribonucleoprotein particle (snoRNP) thought to participate in the processing and modification of pre-ribosomal RNA. Essential for embryogenesis. Plays a critical role in embryo sac development and gametic cell fate. Required for the correct positioning of the first division plane of zygote. May function during early embryogenesis. The protein is U3 snoRNP-associated protein-like YAO of Arabidopsis thaliana (Mouse-ear cress).